The primary structure comprises 187 residues: Elongation factor P (187 aa).

This sequence belongs to the elongation factor P family.

The protein resides in the cytoplasm. Its pathway is protein biosynthesis; polypeptide chain elongation. In terms of biological role, involved in peptide bond synthesis. Stimulates efficient translation and peptide-bond synthesis on native or reconstituted 70S ribosomes in vitro. Probably functions indirectly by altering the affinity of the ribosome for aminoacyl-tRNA, thus increasing their reactivity as acceptors for peptidyl transferase. This Prochlorococcus marinus (strain NATL2A) protein is Elongation factor P.